The following is a 689-amino-acid chain: DNA ligase (689 aa).

NAD(+)-binding positions include 40 to 44 (DSEYD), 89 to 90 (SL), and Glu-121. The active-site N6-AMP-lysine intermediate is the Lys-123. Residues Arg-144, Glu-179, Lys-295, and Lys-319 each contribute to the NAD(+) site. Zn(2+) is bound by residues Cys-413, Cys-416, Cys-431, and Cys-437. Residues 610-689 (REQSGLTDKI…EEWLTLIKNV (80 aa)) form the BRCT domain.

Belongs to the NAD-dependent DNA ligase family. LigA subfamily. Mg(2+) serves as cofactor. It depends on Mn(2+) as a cofactor.

It catalyses the reaction NAD(+) + (deoxyribonucleotide)n-3'-hydroxyl + 5'-phospho-(deoxyribonucleotide)m = (deoxyribonucleotide)n+m + AMP + beta-nicotinamide D-nucleotide.. Functionally, DNA ligase that catalyzes the formation of phosphodiester linkages between 5'-phosphoryl and 3'-hydroxyl groups in double-stranded DNA using NAD as a coenzyme and as the energy source for the reaction. It is essential for DNA replication and repair of damaged DNA. This Rickettsia conorii (strain ATCC VR-613 / Malish 7) protein is DNA ligase.